Here is a 258-residue protein sequence, read N- to C-terminus: MAFNPLLSLLKADAIFLGQLSKSSFCATSRAFSVFYFTRFKRSAYVSAPFGIEPHDEKELKTIDDNVHSNNLSWQKIQEHEVIRELYRKAAYELPGLTPYTQSFKKPADSQIFRFESDVQMSSFEKMNPKVVVTFKVTNIPLLEEKQRHVLRLLVGPRYNPEEDLVRISSDKYSSALQNKYHLIKILTSLIEESKRNAEKFSHVPLNTGHWKYKKCDKRMPQEWLADATTLTSKKKTTIGKQSHNTVLERESIATTDE.

The transit peptide at 1 to 39 (MAFNPLLSLLKADAIFLGQLSKSSFCATSRAFSVFYFTR) directs the protein to the mitochondrion.

This sequence belongs to the mitochondrion-specific ribosomal protein mS35 family. Component of the mitochondrial small ribosomal subunit (mt-SSU). Mature yeast 74S mitochondrial ribosomes consist of a small (37S) and a large (54S) subunit. The 37S small subunit contains a 15S ribosomal RNA (15S mt-rRNA) and at least 32 different proteins. The 54S large subunit contains a 21S rRNA (21S mt-rRNA) and at least 45 different proteins.

It localises to the mitochondrion. Its function is as follows. Component of the mitochondrial ribosome (mitoribosome), a dedicated translation machinery responsible for the synthesis of mitochondrial genome-encoded proteins, including at least some of the essential transmembrane subunits of the mitochondrial respiratory chain. The mitoribosomes are attached to the mitochondrial inner membrane and translation products are cotranslationally integrated into the membrane. The protein is Small ribosomal subunit protein mS35 (rsm24) of Schizosaccharomyces pombe (strain 972 / ATCC 24843) (Fission yeast).